The primary structure comprises 147 residues: MTAIRLREFIERRPVIPPSIFIAHQGRDVQGYYPGQLARLHFDHSAKRAPRPLIDLTIPPKTKYHYQPQLDQQTLIRYICLRRHSKPAEPWYKETTYRRDYSLPFYEIDWNQKLATVSLNPRPLNSLPELYCCEERSSFERNAFKLK.

This Homo sapiens (Human) protein is Protein SPMIP3.